The sequence spans 375 residues: Delta(9) fatty acid conjugase-like enzyme (375 aa).

Transmembrane regions (helical) follow at residues 38–58 (LSLS…LFYV) and 66–86 (LPYS…GAFL). The Histidine box-1 signature appears at 94–98 (HECGH). Positions 130–134 (HRNHH) match the Histidine box-2 motif. Transmembrane regions (helical) follow at residues 168–188 (FGLV…YLIF), 219–239 (VFFS…IAIA), and 241–261 (GAML…AFIF). Residues 307-311 (HVVHH) carry the Histidine box-3 motif.

This sequence belongs to the fatty acid desaturase type 1 family.

The protein localises to the membrane. In terms of biological role, involved in the biosynthesis of dimorphecolic acid (9-OH-18:2(10E,12E)). Catalyzes the formation of the C-9 hydroxyl group and the (E)-delta(10) double bond from the trans-linoleic acid (16:2(9Z,12E)) produced by FAD2-1. Very limited activity with cis-linoleic acid (16:2(9Z,12Z)). This chain is Delta(9) fatty acid conjugase-like enzyme, found in Dimorphotheca sinuata (African daisy).